The primary structure comprises 466 residues: Glutamate decarboxylase (466 aa).

Lys-277 is modified (N6-(pyridoxal phosphate)lysine).

This sequence belongs to the group II decarboxylase family. Pyridoxal 5'-phosphate is required as a cofactor.

It carries out the reaction L-glutamate + H(+) = 4-aminobutanoate + CO2. Its function is as follows. Converts internalized glutamate to GABA and increases the internal pH. Involved in glutamate-dependent acid resistance. In Lactococcus lactis subsp. lactis (strain IL1403) (Streptococcus lactis), this protein is Glutamate decarboxylase (gadB).